The chain runs to 360 residues: Deoxyhypusine hydroxylase (360 aa).

3 HEAT-like PBS-type repeats span residues leucine 56–aspartate 82, valine 89–aspartate 115, and glutamate 213–aspartate 245. Histidine 58, glutamate 59, histidine 91, and glutamate 92 together coordinate Fe cation. 4 residues coordinate Fe cation: histidine 252, glutamate 253, histidine 285, and glutamate 286.

This sequence belongs to the deoxyhypusine hydroxylase family. Fe(2+) serves as cofactor.

The protein localises to the cytoplasm. It is found in the nucleus. It carries out the reaction [eIF5A protein]-deoxyhypusine + AH2 + O2 = [eIF5A protein]-hypusine + A + H2O. The protein operates within protein modification; eIF5A hypusination. Its function is as follows. Catalyzes the hydroxylation of the N(6)-(4-aminobutyl)-L-lysine intermediate to form hypusine, an essential post-translational modification only found in mature eIF-5A factor. The protein is Deoxyhypusine hydroxylase of Mycosarcoma maydis (Corn smut fungus).